Here is a 603-residue protein sequence, read N- to C-terminus: Aquaporin-2 (603 aa).

The chain crosses the membrane as a helical span at residues 40-70 (SLKKYKYNLFFEFIGSFLFVFFISIYMLNSN). Composition is skewed to basic and acidic residues over residues 135 to 149 (NNKSKREVERDDDKI) and 156 to 190 (EFEKDNEKKKNYDNINEKEISTTSDGKIKDMEDPK). Residues 135–200 (NNKSKREVER…NISNKNENYD (66 aa)) form a disordered region. Polar residues predominate over residues 191–200 (NISNKNENYD). The next 5 helical transmembrane spans lie at 282-299 (HAIYSFVGCFIYVIFILL), 321-346 (FALSTLYITFQYFGGIVASIICAHLY), 360-393 (IIKTFLCEFISTFLITLLLLSLYNYKKKFMEENK), 442-471 (NKYIKYIMNHIFYLLFIFFSLLFFVFVTNT), and 509-542 (ITKIFQLLIFYIQSLPLWIGPYFGSAFAATFLSL).

Belongs to the MIP/aquaporin (TC 1.A.8) family.

It is found in the endomembrane system. It carries out the reaction H2O(in) = H2O(out). The catalysed reaction is glycerol(in) = glycerol(out). Functionally, required for sporozoite development in the mosquito vector. The protein is Aquaporin-2 of Plasmodium falciparum (isolate NF54).